Reading from the N-terminus, the 906-residue chain is Protein transport protein SEC24-2 (906 aa).

Zn(2+) contacts are provided by Cys-222, Cys-225, Cys-244, and Cys-247. The tract at residues 222–247 (CRRCRSYMNPFVTFIEQGRRWRCNFC) is zinc finger-like.

Belongs to the SEC23/SEC24 family. SEC24 subfamily. As to quaternary structure, the COPII coat is composed of at least 5 proteins: the SEC23/24 complex, the SEC13/31 complex, and the protein SAR1. Golgi apparatus membrane; Peripheral membrane protein; Cytoplasmic side.

Its subcellular location is the cytoplasm. The protein resides in the cytoplasmic vesicle. It is found in the COPII-coated vesicle membrane. The protein localises to the endoplasmic reticulum membrane. It localises to the golgi apparatus membrane. Functionally, component of the coat protein complex II (COPII) which promotes the formation of transport vesicles from the endoplasmic reticulum (ER). The coat has two main functions, the physical deformation of the endoplasmic reticulum membrane into vesicles and the selection of cargo molecules. The sequence is that of Protein transport protein SEC24-2 (SEC242) from Candida glabrata (strain ATCC 2001 / BCRC 20586 / JCM 3761 / NBRC 0622 / NRRL Y-65 / CBS 138) (Yeast).